Here is a 560-residue protein sequence, read N- to C-terminus: 2-succinyl-5-enolpyruvyl-6-hydroxy-3-cyclohexene-1-carboxylate synthase (560 aa).

The protein belongs to the TPP enzyme family. MenD subfamily. Homodimer. The cofactor is Mg(2+). It depends on Mn(2+) as a cofactor. Requires thiamine diphosphate as cofactor.

The enzyme catalyses isochorismate + 2-oxoglutarate + H(+) = 5-enolpyruvoyl-6-hydroxy-2-succinyl-cyclohex-3-ene-1-carboxylate + CO2. The protein operates within quinol/quinone metabolism; 1,4-dihydroxy-2-naphthoate biosynthesis; 1,4-dihydroxy-2-naphthoate from chorismate: step 2/7. It functions in the pathway quinol/quinone metabolism; menaquinone biosynthesis. In terms of biological role, catalyzes the thiamine diphosphate-dependent decarboxylation of 2-oxoglutarate and the subsequent addition of the resulting succinic semialdehyde-thiamine pyrophosphate anion to isochorismate to yield 2-succinyl-5-enolpyruvyl-6-hydroxy-3-cyclohexene-1-carboxylate (SEPHCHC). This is 2-succinyl-5-enolpyruvyl-6-hydroxy-3-cyclohexene-1-carboxylate synthase from Pectobacterium atrosepticum (strain SCRI 1043 / ATCC BAA-672) (Erwinia carotovora subsp. atroseptica).